The chain runs to 326 residues: Transmembrane protein 255B (326 aa).

A run of 4 helical transmembrane segments spans residues 26–46, 55–75, 85–105, and 200–220; these read LWFV…GLAA, VGGY…IIGI, LVAA…CAIV, and AVLN…LGAF. Residues 284 to 326 form a disordered region; sequence LASSEDLQPPSPSSSGSGLPGQAPPCYAPTYFPPGEKPPPYAP. A compositionally biased stretch (pro residues) spans 305–326; that stretch reads QAPPCYAPTYFPPGEKPPPYAP.

This sequence belongs to the TMEM255 family.

It localises to the membrane. This chain is Transmembrane protein 255B (TMEM255B), found in Homo sapiens (Human).